Consider the following 264-residue polypeptide: LIMR family protein SELMODRAFT_416716 (264 aa).

4 helical membrane-spanning segments follow: residues 23–43 (VVILLTVLCLLLGFLYAVIGY), 96–116 (ILFTMFGGVGMATLPLSLIFA), 194–214 (IIWLLHIIVFMLVNPPAFPFL), and 225–245 (WGLLGTTTFAIFCYYLVMSVI).

Belongs to the LIMR family.

Its subcellular location is the membrane. The chain is LIMR family protein SELMODRAFT_416716 from Selaginella moellendorffii (Spikemoss).